Here is a 149-residue protein sequence, read N- to C-terminus: Calmodulin (149 aa).

4 consecutive EF-hand domains span residues 8–43 (EQIS…LGQN), 44–79 (PTEA…KMQD), 81–116 (DSEE…LGEK), and 117–149 (LTDE…MMSK). Positions 21, 23, 25, 27, 32, 57, 59, 61, 63, 68, 94, 96, 98, and 105 each coordinate Ca(2+). Position 116 is an N6,N6,N6-trimethyllysine (K116). Ca(2+) is bound by residues D130, D132, D134, Q136, and E141.

It belongs to the calmodulin family.

Calmodulin mediates the control of a large number of enzymes, ion channels and other proteins by Ca(2+). Among the enzymes to be stimulated by the calmodulin-Ca(2+) complex are a number of protein kinases and phosphatases. This is Calmodulin from Trypanosoma brucei brucei.